Reading from the N-terminus, the 147-residue chain is uncharacterized protein (147 aa).

2 helical membrane-spanning segments follow: residues 41-61 and 67-87; these read LANF…ALLI and LLAA…SFPL.

Its subcellular location is the cell membrane. This is an uncharacterized protein from Pyrococcus horikoshii (strain ATCC 700860 / DSM 12428 / JCM 9974 / NBRC 100139 / OT-3).